Here is a 426-residue protein sequence, read N- to C-terminus: Enolase (426 aa).

Position 163 (glutamine 163) interacts with (2R)-2-phosphoglycerate. Glutamate 205 functions as the Proton donor in the catalytic mechanism. The Mg(2+) site is built by aspartate 242, glutamate 286, and aspartate 313. Positions 338, 367, 368, and 389 each coordinate (2R)-2-phosphoglycerate. The Proton acceptor role is filled by lysine 338.

It belongs to the enolase family. The cofactor is Mg(2+).

The protein resides in the cytoplasm. Its subcellular location is the secreted. It is found in the cell surface. The catalysed reaction is (2R)-2-phosphoglycerate = phosphoenolpyruvate + H2O. It functions in the pathway carbohydrate degradation; glycolysis; pyruvate from D-glyceraldehyde 3-phosphate: step 4/5. Functionally, catalyzes the reversible conversion of 2-phosphoglycerate (2-PG) into phosphoenolpyruvate (PEP). It is essential for the degradation of carbohydrates via glycolysis. The chain is Enolase from Helicobacter pylori (strain J99 / ATCC 700824) (Campylobacter pylori J99).